The following is a 450-amino-acid chain: Cell division cycle 20.5, cofactor of APC complex (450 aa).

WD repeat units lie at residues 129 to 166 (ADDFYLNLLDWGSSNVLAIALGDTVYLWDASSGSTYKL), 171 to 210 (EEEGPVTSINWTQDGLDLAIGLDNSEVQLWDCVSNRQVRT), 214 to 251 (GHESRVGSLAWNNHILTTGGMDGKIVNNDVRIRSSIVE), 255 to 294 (GHTEEVCGLKWSESGKKLASGGNDNVVHIWDHRSVASSNP), 304 to 346 (EHTA…CLNS), 348 to 389 (ETGS…KMAE), and 392 to 431 (GHTSRVLFMAQSPDGCTVASAAGDETLRLWNVFGEPPKTT).

It belongs to the WD repeat CDC20/Fizzy family. As to quaternary structure, the APC/C is composed of at least 11 subunits that stay tightly associated throughout the cell cycle. Binds to GIG1 and PYM. Part of the mitotic checkpoint complex (MCC); interacts with MAD2 and BUB1.

The protein localises to the nucleus. It participates in protein modification; protein ubiquitination. In terms of biological role, component of the anaphase promoting complex/cyclosome (APC/C), a cell cycle-regulated E3 ubiquitin-protein ligase complex that controls progression through mitosis and the G1 phase of the cell cycle. This is Cell division cycle 20.5, cofactor of APC complex (CDC20-5) from Arabidopsis thaliana (Mouse-ear cress).